Reading from the N-terminus, the 452-residue chain is Chromosomal replication initiator protein DnaA (452 aa).

A domain I, interacts with DnaA modulators region spans residues 1-85 (MSTTAWQKCL…IEVGSKPVEA (85 aa)). The segment at 85–115 (AVDTPAETIVTSSSTAPLKSAPKKAVDYKSS) is domain II. Positions 116–332 (HLNKKFVFDS…GALRRVIANA (217 aa)) are domain III, AAA+ region. Residues Gly-160, Gly-162, Lys-163, and Thr-164 each coordinate ATP. The tract at residues 333–452 (HFTGKPITIE…YKNLMRILSS (120 aa)) is domain IV, binds dsDNA.

The protein belongs to the DnaA family. As to quaternary structure, oligomerizes as a right-handed, spiral filament on DNA at oriC.

It localises to the cytoplasm. In terms of biological role, plays an essential role in the initiation and regulation of chromosomal replication. ATP-DnaA binds to the origin of replication (oriC) to initiate formation of the DNA replication initiation complex once per cell cycle. Binds the DnaA box (a 9 base pair repeat at the origin) and separates the double-stranded (ds)DNA. Forms a right-handed helical filament on oriC DNA; dsDNA binds to the exterior of the filament while single-stranded (ss)DNA is stabiized in the filament's interior. The ATP-DnaA-oriC complex binds and stabilizes one strand of the AT-rich DNA unwinding element (DUE), permitting loading of DNA polymerase. After initiation quickly degrades to an ADP-DnaA complex that is not apt for DNA replication. Binds acidic phospholipids. The protein is Chromosomal replication initiator protein DnaA of Legionella pneumophila (strain Paris).